The sequence spans 275 residues: Diaminopimelate epimerase (275 aa).

The substrate site is built by N20 and N63. C72 functions as the Proton donor in the catalytic mechanism. Substrate-binding positions include 73–74 (GN), N179, and 197–198 (ER). C207 functions as the Proton acceptor in the catalytic mechanism. Substrate is bound at residue 208–209 (GT).

The protein belongs to the diaminopimelate epimerase family. Homodimer.

Its subcellular location is the cytoplasm. The enzyme catalyses (2S,6S)-2,6-diaminopimelate = meso-2,6-diaminopimelate. The protein operates within amino-acid biosynthesis; L-lysine biosynthesis via DAP pathway; DL-2,6-diaminopimelate from LL-2,6-diaminopimelate: step 1/1. In terms of biological role, catalyzes the stereoinversion of LL-2,6-diaminopimelate (L,L-DAP) to meso-diaminopimelate (meso-DAP), a precursor of L-lysine and an essential component of the bacterial peptidoglycan. The chain is Diaminopimelate epimerase from Chlamydia trachomatis serovar A (strain ATCC VR-571B / DSM 19440 / HAR-13).